A 227-amino-acid polypeptide reads, in one-letter code: Cytochrome c oxidase subunit 2 (227 aa).

Residues 1 to 14 are Mitochondrial intermembrane-facing; it reads MALPFQLGFQDATS. A helical transmembrane segment spans residues 15 to 45; that stretch reads PIMEELLHFHDHTLMIVFMISSLVLYLISSM. At 46–59 the chain is on the mitochondrial matrix side; it reads LTTRLTHTSTMDAQ. A helical membrane pass occupies residues 60–87; it reads EVETIWTILPAIILITIALPSLRILYMM. Topologically, residues 88–227 are mitochondrial intermembrane; sequence DEINNPSMTI…CFEKWSTSML (140 aa). Cu cation-binding residues include His161, Cys196, Glu198, Cys200, His204, and Met207. Glu198 provides a ligand contact to Mg(2+).

This sequence belongs to the cytochrome c oxidase subunit 2 family. In terms of assembly, component of the cytochrome c oxidase (complex IV, CIV), a multisubunit enzyme composed of 14 subunits. The complex is composed of a catalytic core of 3 subunits MT-CO1, MT-CO2 and MT-CO3, encoded in the mitochondrial DNA, and 11 supernumerary subunits COX4I, COX5A, COX5B, COX6A, COX6B, COX6C, COX7A, COX7B, COX7C, COX8 and NDUFA4, which are encoded in the nuclear genome. The complex exists as a monomer or a dimer and forms supercomplexes (SCs) in the inner mitochondrial membrane with NADH-ubiquinone oxidoreductase (complex I, CI) and ubiquinol-cytochrome c oxidoreductase (cytochrome b-c1 complex, complex III, CIII), resulting in different assemblies (supercomplex SCI(1)III(2)IV(1) and megacomplex MCI(2)III(2)IV(2)). Found in a complex with TMEM177, COA6, COX18, COX20, SCO1 and SCO2. Interacts with TMEM177 in a COX20-dependent manner. Interacts with COX20. Interacts with COX16. Requires Cu cation as cofactor.

It localises to the mitochondrion inner membrane. It carries out the reaction 4 Fe(II)-[cytochrome c] + O2 + 8 H(+)(in) = 4 Fe(III)-[cytochrome c] + 2 H2O + 4 H(+)(out). In terms of biological role, component of the cytochrome c oxidase, the last enzyme in the mitochondrial electron transport chain which drives oxidative phosphorylation. The respiratory chain contains 3 multisubunit complexes succinate dehydrogenase (complex II, CII), ubiquinol-cytochrome c oxidoreductase (cytochrome b-c1 complex, complex III, CIII) and cytochrome c oxidase (complex IV, CIV), that cooperate to transfer electrons derived from NADH and succinate to molecular oxygen, creating an electrochemical gradient over the inner membrane that drives transmembrane transport and the ATP synthase. Cytochrome c oxidase is the component of the respiratory chain that catalyzes the reduction of oxygen to water. Electrons originating from reduced cytochrome c in the intermembrane space (IMS) are transferred via the dinuclear copper A center (CU(A)) of subunit 2 and heme A of subunit 1 to the active site in subunit 1, a binuclear center (BNC) formed by heme A3 and copper B (CU(B)). The BNC reduces molecular oxygen to 2 water molecules using 4 electrons from cytochrome c in the IMS and 4 protons from the mitochondrial matrix. The sequence is that of Cytochrome c oxidase subunit 2 (MT-CO2) from Phyllostomus hastatus (Greater spear-nosed bat).